A 262-amino-acid polypeptide reads, in one-letter code: Zinc import ATP-binding protein ZnuC (262 aa).

The ABC transporter domain maps to 5 to 220 (IELQDICVDF…PSYLAMFGHR (216 aa)). 37–44 (GPNGAGKS) contributes to the ATP binding site.

This sequence belongs to the ABC transporter superfamily. Zinc importer (TC 3.A.1.15.5) family. As to quaternary structure, the complex is composed of two ATP-binding proteins (ZnuC), two transmembrane proteins (ZnuB) and a solute-binding protein (ZnuA).

The protein localises to the cell inner membrane. The catalysed reaction is Zn(2+)(out) + ATP(in) + H2O(in) = Zn(2+)(in) + ADP(in) + phosphate(in) + H(+)(in). Functionally, part of the ABC transporter complex ZnuABC involved in zinc import. Responsible for energy coupling to the transport system. This is Zinc import ATP-binding protein ZnuC from Vibrio cholerae serotype O1 (strain ATCC 39315 / El Tor Inaba N16961).